The sequence spans 438 residues: MSHEEDLIDYSDEELQTTDAAATTAAPAANGAPAKTGDLTVTGGRSDKKGSYVGIHSTGFRDFLLKGELLRAITDCGFEHPSEVCIPTAILNVDVLCQAKSGLGKTAVFVLTTLHQLEPVPGECSVLVMCHTRELAYQIKNEYARFSKYLPDVKTAVFYGGTPIQKDIEVLSNKESYPNIVVGTPGRLNALVREKKLSLRNVKAFVLDECDKMLDQIDMRRDVQEIFRATPADKQVMMFSATLSQEIRPICKKFMRNPLEVYVDDDTKLTLHGLQQYYIKLSESEKNRKLNDLLDNLEFNQVIIFVKSTQRANELDKLLRECNFPSIAVHSGVSQEERIKRYKEFKEFNKRICVATDVFGRGIDIERINLAINYDLPADADSYLHRVGRAGRFGTKGLSISFVSSEDDEKVLKDIEKRFEVALPEYPEGGVDSSTYMA.

Residues 23-36 (TTAAPAANGAPAKT) are compositionally biased toward low complexity. The disordered stretch occupies residues 23 to 42 (TTAAPAANGAPAKTGDLTVT). Residues 58 to 86 (TGFRDFLLKGELLRAITDCGFEHPSEVCI) carry the Q motif motif. Residues 86–261 (IPTAILNVDV…KKFMRNPLEV (176 aa)) enclose the Helicase ATP-binding domain. Residue 99-106 (AKSGLGKT) coordinates ATP. The short motif at 208–211 (DECD) is the DEAD box element. The Helicase C-terminal domain maps to 289 to 434 (KLNDLLDNLE…EYPEGGVDSS (146 aa)).

Belongs to the DEAD box helicase family. DECD subfamily.

The protein resides in the nucleus. The catalysed reaction is ATP + H2O = ADP + phosphate + H(+). Functionally, ATP-binding RNA helicase involved in transcription elongation and required for the export of mRNA out of the nucleus. SUB2 also plays a role in pre-mRNA splicing and spliceosome assembly. May be involved in rDNA and telomeric silencing, and maintenance of genome integrity. This is ATP-dependent RNA helicase sub2 (sub2) from Aspergillus terreus (strain NIH 2624 / FGSC A1156).